Reading from the N-terminus, the 325-residue chain is Homeobox protein Hox-A1a (325 aa).

Residues 187-192 (TFDWMK) carry the Antp-type hexapeptide motif. Disordered regions lie at residues 194 to 215 (KRNPPKTGRSGEYGYGGQPNTV) and 264 to 325 (RMKQ…YPSN). Residues 212–271 (PNTVRTNFTTKQLTELEKEFHFNKYLTRARRVEIAAALQLNETQVKIWFQNRRMKQKKRE) constitute a DNA-binding region (homeobox). Over residues 285–300 (SGERNQEKVEDGESEK) the composition is skewed to basic and acidic residues. Residues 301–317 (SVSAPSTPSPTSSTVSS) show a composition bias toward low complexity.

This sequence belongs to the Antp homeobox family. Labial subfamily.

It localises to the nucleus. In terms of biological role, sequence-specific transcription factor which is part of a developmental regulatory system that provides cells with specific positional identities on the anterior-posterior axis. The polypeptide is Homeobox protein Hox-A1a (hoxa1a) (Takifugu rubripes (Japanese pufferfish)).